The chain runs to 627 residues: Sodium- and chloride-dependent GABA transporter 3 (627 aa).

The tract at residues 1 to 36 (MTAEQALPLGNGKAAEEARGSEALGGGGGGAAGTRE) is disordered. Residues 1–53 (MTAEQALPLGNGKAAEEARGSEALGGGGGGAAGTREARDKAVHERGHWNNKVE) are Cytoplasmic-facing. Serine 21 bears the Phosphoserine mark. Positions 23–32 (ALGGGGGGAA) are enriched in gly residues. The next 3 helical transmembrane spans lie at 54–74 (FVLSVAGEIIGLGNVWRFPYL), 82–101 (AFLIPYVVFFICCGIPVFFL), and 126–146 (GIGYATQVIEAHLNVYYIIIL). The Extracellular portion of the chain corresponds to 147–220 (AWAIFYLSNC…DGIEHIGNLR (74 aa)). Asparagine 182, asparagine 185, and asparagine 193 each carry an N-linked (GlcNAc...) asparagine glycan. 9 helical membrane-spanning segments follow: residues 221-239 (WELALCLLAAWTICYFCIW), 248-265 (VVYVTATFPYIMLLILLI), 301-318 (IFFSYAICLGCLTALGSY), 330-351 (IMLCCLNSGTSFVAGFAIFSVL), 384-403 (MPLSPLWATLFFMMLIFLGL), 433-451 (LLILALSIVSYFLGLVMLT), 468-488 (GMCLLFVAIFECVCIGWVYGS), 509-528 (WCWKVVTPGICAGIFIFFLV), and 548-566 (IGWLMALSSMLCIPLWIFI). Residues 567-627 (KLWKTEGTLP…SAITEKETHF (61 aa)) lie on the Cytoplasmic side of the membrane.

It belongs to the sodium:neurotransmitter symporter (SNF) (TC 2.A.22) family. SLC6A11 subfamily. Brain and retina. Expressed predominantly within neurons. Expressed in the hippocampus (at protein level).

Its subcellular location is the cell membrane. It carries out the reaction 4-aminobutanoate(out) + chloride(out) + 2 Na(+)(out) = 4-aminobutanoate(in) + chloride(in) + 2 Na(+)(in). The enzyme catalyses taurine(out) + chloride(out) + 2 Na(+)(out) = taurine(in) + chloride(in) + 2 Na(+)(in). The catalysed reaction is beta-alanine(out) + chloride(out) + 2 Na(+)(out) = beta-alanine(in) + chloride(in) + 2 Na(+)(in). It catalyses the reaction hypotaurine(out) + chloride(out) + 2 Na(+)(out) = hypotaurine(in) + chloride(in) + 2 Na(+)(in). Its activity is regulated as follows. GABA transport is inhibited by beta-alanine. Its function is as follows. Mediates sodium- and chloride-dependent transport of gamma-aminobutyric acid (GABA). Can also mediate transport of beta-alanine and to a lower extent that of taurine and hypotaurine. This Rattus norvegicus (Rat) protein is Sodium- and chloride-dependent GABA transporter 3 (Slc6a11).